A 214-amino-acid chain; its full sequence is 3,4-dihydroxy-2-butanone 4-phosphate synthase (214 aa).

D-ribulose 5-phosphate contacts are provided by residues 37–38 (RE), Asp-42, 150–154 (RRGHT), and Glu-174. Residue Glu-38 participates in Mg(2+) binding. His-153 is a binding site for Mg(2+).

The protein belongs to the DHBP synthase family. Homodimer. It depends on Mg(2+) as a cofactor. Mn(2+) serves as cofactor.

The catalysed reaction is D-ribulose 5-phosphate = (2S)-2-hydroxy-3-oxobutyl phosphate + formate + H(+). The protein operates within cofactor biosynthesis; riboflavin biosynthesis; 2-hydroxy-3-oxobutyl phosphate from D-ribulose 5-phosphate: step 1/1. Catalyzes the conversion of D-ribulose 5-phosphate to formate and 3,4-dihydroxy-2-butanone 4-phosphate. In Pasteurella multocida (strain Pm70), this protein is 3,4-dihydroxy-2-butanone 4-phosphate synthase.